The primary structure comprises 342 residues: UDP-3-O-acylglucosamine N-acyltransferase (342 aa).

H253 (proton acceptor) is an active-site residue.

The protein belongs to the transferase hexapeptide repeat family. LpxD subfamily. In terms of assembly, homotrimer.

The catalysed reaction is a UDP-3-O-[(3R)-3-hydroxyacyl]-alpha-D-glucosamine + a (3R)-hydroxyacyl-[ACP] = a UDP-2-N,3-O-bis[(3R)-3-hydroxyacyl]-alpha-D-glucosamine + holo-[ACP] + H(+). It functions in the pathway bacterial outer membrane biogenesis; LPS lipid A biosynthesis. In terms of biological role, catalyzes the N-acylation of UDP-3-O-acylglucosamine using 3-hydroxyacyl-ACP as the acyl donor. Is involved in the biosynthesis of lipid A, a phosphorylated glycolipid that anchors the lipopolysaccharide to the outer membrane of the cell. The protein is UDP-3-O-acylglucosamine N-acyltransferase of Rickettsia bellii (strain RML369-C).